We begin with the raw amino-acid sequence, 367 residues long: 3-dehydroquinate synthase (367 aa).

Residues 69–74, 103–107, 127–128, lysine 140, and lysine 149 contribute to the NAD(+) site; these read DGEAFK, GVIGD, and TT. Glutamate 182, histidine 245, and histidine 262 together coordinate Zn(2+).

This sequence belongs to the sugar phosphate cyclases superfamily. Dehydroquinate synthase family. Requires Co(2+) as cofactor. Zn(2+) serves as cofactor. The cofactor is NAD(+).

The protein localises to the cytoplasm. The enzyme catalyses 7-phospho-2-dehydro-3-deoxy-D-arabino-heptonate = 3-dehydroquinate + phosphate. It participates in metabolic intermediate biosynthesis; chorismate biosynthesis; chorismate from D-erythrose 4-phosphate and phosphoenolpyruvate: step 2/7. In terms of biological role, catalyzes the conversion of 3-deoxy-D-arabino-heptulosonate 7-phosphate (DAHP) to dehydroquinate (DHQ). This chain is 3-dehydroquinate synthase, found in Pseudomonas savastanoi pv. phaseolicola (strain 1448A / Race 6) (Pseudomonas syringae pv. phaseolicola (strain 1448A / Race 6)).